Consider the following 579-residue polypeptide: Isocitrate dehydrogenase kinase/phosphatase (579 aa).

ATP-binding positions include 324-330 and Lys-345; that span reads ADGTPGM. Asp-380 is a catalytic residue.

It belongs to the AceK family.

The protein localises to the cytoplasm. It carries out the reaction L-seryl-[isocitrate dehydrogenase] + ATP = O-phospho-L-seryl-[isocitrate dehydrogenase] + ADP + H(+). Functionally, bifunctional enzyme which can phosphorylate or dephosphorylate isocitrate dehydrogenase (IDH) on a specific serine residue. This is a regulatory mechanism which enables bacteria to bypass the Krebs cycle via the glyoxylate shunt in response to the source of carbon. When bacteria are grown on glucose, IDH is fully active and unphosphorylated, but when grown on acetate or ethanol, the activity of IDH declines drastically concomitant with its phosphorylation. The chain is Isocitrate dehydrogenase kinase/phosphatase from Xanthomonas euvesicatoria pv. vesicatoria (strain 85-10) (Xanthomonas campestris pv. vesicatoria).